A 648-amino-acid chain; its full sequence is Threonine--tRNA ligase (648 aa).

In terms of domain architecture, TGS spans M1–T61. The segment at D243 to P549 is catalytic. The Zn(2+) site is built by C349, H400, and H526.

The protein belongs to the class-II aminoacyl-tRNA synthetase family. As to quaternary structure, homodimer. The cofactor is Zn(2+).

It localises to the cytoplasm. It carries out the reaction tRNA(Thr) + L-threonine + ATP = L-threonyl-tRNA(Thr) + AMP + diphosphate + H(+). Functionally, catalyzes the attachment of threonine to tRNA(Thr) in a two-step reaction: L-threonine is first activated by ATP to form Thr-AMP and then transferred to the acceptor end of tRNA(Thr). Also edits incorrectly charged L-seryl-tRNA(Thr). In Orientia tsutsugamushi (strain Ikeda) (Rickettsia tsutsugamushi), this protein is Threonine--tRNA ligase.